A 221-amino-acid chain; its full sequence is 2-amino-5-formylamino-6-ribosylaminopyrimidin-4(3H)-one 5'-monophosphate deformylase (221 aa).

Residues Glu29, His31, Asp40, and His108 each contribute to the Fe cation site.

The protein belongs to the creatininase superfamily. FAPy deformylase family. As to quaternary structure, homodimer. Fe(2+) is required as a cofactor. Zn(2+) serves as cofactor.

It carries out the reaction 2-amino-5-formylamino-6-(5-phospho-D-ribosylamino)pyrimidin-4(3H)-one + H2O = 2,5-diamino-6-(1-D-ribosylamino)pyrimidin-4(3H)-one 5'-phosphate + formate + H(+). The protein operates within cofactor biosynthesis; coenzyme F420 biosynthesis. Its pathway is cofactor biosynthesis; riboflavin biosynthesis. Functionally, catalyzes the hydrolysis of the formamide of 2-amino-5-formylamino-6-ribosylamino-4(3H)-pyrimidinone 5'-monophosphate (FAPy) to form 2,5-diamino-6-ribosylamino-4(3H)-pyrimidinone 5'-phosphate (APy). This Methanococcus maripaludis (strain DSM 14266 / JCM 13030 / NBRC 101832 / S2 / LL) protein is 2-amino-5-formylamino-6-ribosylaminopyrimidin-4(3H)-one 5'-monophosphate deformylase.